The following is a 620-amino-acid chain: Translocator protein BipB (620 aa).

The tract at residues 58–95 is disordered; that stretch reads QCDAQPAAHDARLDDRPALRAPQERDAPPLGASDTGSR. The span at 66-84 shows a compositional bias: basic and acidic residues; it reads HDARLDDRPALRAPQERDA. The stretch at 309–339 forms a coiled coil; sequence EMQAKREAELQKKSDEYQAQVKKAEEMQKTM. 3 consecutive transmembrane segments (helical) span residues 355–375, 401–421, and 430–450; these read FAAAAFTGGASLALAAVGLAL, AILKPLMEMISSLITKALVAC, and LAGAILGAVVTGVALVAAAFV.

This sequence belongs to the SctE/SipB/YopB family.

The protein resides in the secreted. It localises to the host membrane. Functionally, plays a role in the bacterium-induced formation of multinucleated giant cell (MNGC), which is formed after host cell fusion, as well as in the intercellular spreading of bacteria and in the induction of apoptosis in macrophages. May act in concert with other effector proteins to induce fusion of host cell membranes. This chain is Translocator protein BipB (bipB), found in Burkholderia mallei (strain NCTC 10247).